The following is a 221-amino-acid chain: Protein DEHYDRATION-INDUCED 19 homolog 2 (221 aa).

Disordered stretches follow at residues 1-24 (MEDDMWCVSSSGSSRSYRSETAAK) and 162-193 (VLPDSSVEDKNPIKDSSAAKEGTSSCPLSDSD).

It belongs to the Di19 family. Not phosphorylated in vitro by CPK3 or CPK11. As to expression, expressed in seedlings, roots, leaves, stems, flowers and siliques.

The protein resides in the cytoplasm. Its subcellular location is the nucleus. The sequence is that of Protein DEHYDRATION-INDUCED 19 homolog 2 (DI19-2) from Arabidopsis thaliana (Mouse-ear cress).